Here is a 188-residue protein sequence, read N- to C-terminus: Pro-adrenomedullin (188 aa).

The signal sequence occupies residues 1 to 21; that stretch reads MKLVPVALLYLGSLAFLGVDT. An Arginine amide modification is found at R41. Residues 45-92 constitute a propeptide that is removed on maturation; it reads ELRESSSYPTGLADVKAGPVQTLIRPQDVKGASRSPQASSPDAARIRV. The tract at residues 69 to 89 is disordered; it reads RPQDVKGASRSPQASSPDAAR. C110 and C115 are disulfide-bonded. The disordered stretch occupies residues 129 to 175; the sequence is DKDKDGSAPRSKISPQGYGRRRRRSLPEAGLGRTLLQPPEPKLRGAP. Residue Y146 is modified to Tyrosine amide. A propeptide spans 153–188 (preproAM C-terminal fragment); sequence SLPEAGLGRTLLQPPEPKLRGAPDSRVHQVLATLRI.

Belongs to the adrenomedullin family.

It localises to the secreted. Adrenomedullin/ADM and proadrenomedullin N-20 terminal peptide/PAMP are peptide hormones that act as potent hypotensive and vasodilatator agents. Numerous actions have been reported most related to the physiologic control of fluid and electrolyte homeostasis. Its function is as follows. ADM function is mediated by the CALCRL-RAMP2 and CALCRL-RAMP3 receptor complexes with ADM showing the highest potency for the CALCRL-RAMP2 complex. The protein is Pro-adrenomedullin (ADM) of Bos taurus (Bovine).